Consider the following 426-residue polypeptide: MSSPRKVRGKTGRDNDEEEGNSGNLNLRNSLPSSSQKMTPTKPIFGNKMNSENVKPSHHLSFSDKYELVYPEPLESDTDETVWDVSDRSLRNRWNSMDSETAGPSKTVSPVLSGSSRLSKDTETSVSEKELTQLAQIRPLIFNSSARSAMRDCLNTLQKKEELDIIREFLELEQMTLPDDFNSGNTLQNRDKNRYRDILPYDSTRVPLGKNKDYINASYIRIVNHEEEYFYIATQGPLPETIEDFWQMVLENNCNVIAMITREIECGVIKCYSYWPISLKEPLEFEHFSVFLETFHVTQYFTVRVFQIVKKSTGKSQCVKHLQFTKWPDHGTPASADFFIKYVRYVRKSHITGPLLVHCSAGVGRTGVFICVDVVFSAIEKNYSFDIMNIVTQMRKQRCGMIQTKEQYQFCYEIVLEVLQNLLALY.

Residues 1 to 10 (MSSPRKVRGK) show a composition bias toward basic residues. The tract at residues 1–58 (MSSPRKVRGKTGRDNDEEEGNSGNLNLRNSLPSSSQKMTPTKPIFGNKMNSENVKPSH) is disordered. The span at 21 to 35 (NSGNLNLRNSLPSSS) shows a compositional bias: low complexity. Position 76 is a phosphoserine (Ser-76). The span at 95–117 (NSMDSETAGPSKTVSPVLSGSSR) shows a compositional bias: polar residues. Residues 95–124 (NSMDSETAGPSKTVSPVLSGSSRLSKDTET) form a disordered region. Residue Ser-127 is modified to Phosphoserine. Positions 165-418 (IIREFLELEQ…QFCYEIVLEV (254 aa)) constitute a Tyrosine-protein phosphatase domain. Substrate-binding positions include Asp-329, 359–365 (CSAGVGR), and Gln-403. Cys-359 serves as the catalytic Phosphocysteine intermediate.

Belongs to the protein-tyrosine phosphatase family. Non-receptor class subfamily. In terms of tissue distribution, testis-specific. Specifically expressed in testicular germ cells that undergo meiosis (at protein level).

It is found in the nucleus. It localises to the cytoplasm. The protein resides in the cytoskeleton. Its subcellular location is the microtubule organizing center. The protein localises to the centrosome. It catalyses the reaction O-phospho-L-tyrosyl-[protein] + H2O = L-tyrosyl-[protein] + phosphate. Functionally, tyrosine-protein phosphatase targeted to sites of actin polymerization in response of varied extracellular stimuli. Has tyrosine phosphatase activity towards various tyrosyl phosphorylated substrates. This is Tyrosine-protein phosphatase non-receptor type 20 (Ptpn20) from Mus musculus (Mouse).